A 222-amino-acid chain; its full sequence is N-(5'-phosphoribosyl)anthranilate isomerase (222 aa).

The protein belongs to the TrpF family.

It catalyses the reaction N-(5-phospho-beta-D-ribosyl)anthranilate = 1-(2-carboxyphenylamino)-1-deoxy-D-ribulose 5-phosphate. The protein operates within amino-acid biosynthesis; L-tryptophan biosynthesis; L-tryptophan from chorismate: step 3/5. This is N-(5'-phosphoribosyl)anthranilate isomerase from Symbiobacterium thermophilum (strain DSM 24528 / JCM 14929 / IAM 14863 / T).